The sequence spans 382 residues: S-adenosylmethionine synthase (382 aa).

His16 is a binding site for ATP. Asp18 serves as a coordination point for Mg(2+). Glu44 provides a ligand contact to K(+). L-methionine-binding residues include Glu57 and Gln100. Positions 100 to 110 (QSPDIAQGVDN) are flexible loop. ATP is bound by residues 165-167 (DAK), 231-232 (RF), Asp240, 246-247 (RK), and Lys267. Residue Asp240 participates in L-methionine binding. L-methionine is bound at residue Lys271.

This sequence belongs to the AdoMet synthase family. Homotetramer; dimer of dimers. Mg(2+) serves as cofactor. Requires K(+) as cofactor.

The protein localises to the cytoplasm. The enzyme catalyses L-methionine + ATP + H2O = S-adenosyl-L-methionine + phosphate + diphosphate. Its pathway is amino-acid biosynthesis; S-adenosyl-L-methionine biosynthesis; S-adenosyl-L-methionine from L-methionine: step 1/1. In terms of biological role, catalyzes the formation of S-adenosylmethionine (AdoMet) from methionine and ATP. The overall synthetic reaction is composed of two sequential steps, AdoMet formation and the subsequent tripolyphosphate hydrolysis which occurs prior to release of AdoMet from the enzyme. This is S-adenosylmethionine synthase from Legionella pneumophila subsp. pneumophila (strain Philadelphia 1 / ATCC 33152 / DSM 7513).